A 304-amino-acid chain; its full sequence is Ribosomal protein L11 methyltransferase (304 aa).

Thr147, Gly168, Asp190, and Asn238 together coordinate S-adenosyl-L-methionine.

The protein belongs to the methyltransferase superfamily. PrmA family.

It localises to the cytoplasm. The catalysed reaction is L-lysyl-[protein] + 3 S-adenosyl-L-methionine = N(6),N(6),N(6)-trimethyl-L-lysyl-[protein] + 3 S-adenosyl-L-homocysteine + 3 H(+). Methylates ribosomal protein L11. The polypeptide is Ribosomal protein L11 methyltransferase (Prochlorococcus marinus (strain SARG / CCMP1375 / SS120)).